Consider the following 308-residue polypeptide: HTH-type transcriptional activator AllS (308 aa).

In terms of domain architecture, HTH lysR-type spans 2–59 (FDPETLRTFISVAETGSFSKAAERLCKTTATTSYRIKLLEENTGVGLFFRTTRSVSLT). The H-T-H motif DNA-binding region spans 19–38 (FSKAAERLCKTTATTSYRIK).

This sequence belongs to the LysR transcriptional regulatory family.

In terms of biological role, positive regulator essential for the expression of allD operon. Binds to the allD promoter. This Salmonella typhi protein is HTH-type transcriptional activator AllS (allS).